Reading from the N-terminus, the 67-residue chain is uncharacterized protein (67 aa).

2 consecutive transmembrane segments (helical) span residues 10 to 30 (EFFIYIFLFIDKANVESIIMW) and 40 to 60 (LMVGVWVVILFLTWFFLWMVF).

This sequence belongs to the plectrovirus ORF10 family.

The protein localises to the host membrane. This is an uncharacterized protein from Spiroplasma melliferum (SpV1).